Reading from the N-terminus, the 157-residue chain is Endoribonuclease YbeY (157 aa).

Zn(2+) contacts are provided by His112, His116, and His122.

The protein belongs to the endoribonuclease YbeY family. It depends on Zn(2+) as a cofactor.

It localises to the cytoplasm. In terms of biological role, single strand-specific metallo-endoribonuclease involved in late-stage 70S ribosome quality control and in maturation of the 3' terminus of the 16S rRNA. This is Endoribonuclease YbeY from Marinobacter nauticus (strain ATCC 700491 / DSM 11845 / VT8) (Marinobacter aquaeolei).